Consider the following 299-residue polypeptide: UPF0276 protein ABO_1518 (299 aa).

Belongs to the UPF0276 family.

In Alcanivorax borkumensis (strain ATCC 700651 / DSM 11573 / NCIMB 13689 / SK2), this protein is UPF0276 protein ABO_1518.